Here is a 279-residue protein sequence, read N- to C-terminus: 4-diphosphocytidyl-2-C-methyl-D-erythritol kinase (279 aa).

Lysine 10 is a catalytic residue. ATP is bound at residue 91–101 (PVASGIGGGSA). Aspartate 130 is an active-site residue.

This sequence belongs to the GHMP kinase family. IspE subfamily.

The catalysed reaction is 4-CDP-2-C-methyl-D-erythritol + ATP = 4-CDP-2-C-methyl-D-erythritol 2-phosphate + ADP + H(+). It functions in the pathway isoprenoid biosynthesis; isopentenyl diphosphate biosynthesis via DXP pathway; isopentenyl diphosphate from 1-deoxy-D-xylulose 5-phosphate: step 3/6. Its function is as follows. Catalyzes the phosphorylation of the position 2 hydroxy group of 4-diphosphocytidyl-2C-methyl-D-erythritol. The sequence is that of 4-diphosphocytidyl-2-C-methyl-D-erythritol kinase from Ruegeria pomeroyi (strain ATCC 700808 / DSM 15171 / DSS-3) (Silicibacter pomeroyi).